We begin with the raw amino-acid sequence, 300 residues long: UDP-3-O-acyl-N-acetylglucosamine deacetylase (300 aa).

3 residues coordinate Zn(2+): histidine 76, histidine 235, and aspartate 239. Histidine 262 serves as the catalytic Proton donor.

It belongs to the LpxC family. Zn(2+) is required as a cofactor.

The catalysed reaction is a UDP-3-O-[(3R)-3-hydroxyacyl]-N-acetyl-alpha-D-glucosamine + H2O = a UDP-3-O-[(3R)-3-hydroxyacyl]-alpha-D-glucosamine + acetate. It functions in the pathway glycolipid biosynthesis; lipid IV(A) biosynthesis; lipid IV(A) from (3R)-3-hydroxytetradecanoyl-[acyl-carrier-protein] and UDP-N-acetyl-alpha-D-glucosamine: step 2/6. Catalyzes the hydrolysis of UDP-3-O-myristoyl-N-acetylglucosamine to form UDP-3-O-myristoylglucosamine and acetate, the committed step in lipid A biosynthesis. In Halorhodospira halophila (strain DSM 244 / SL1) (Ectothiorhodospira halophila (strain DSM 244 / SL1)), this protein is UDP-3-O-acyl-N-acetylglucosamine deacetylase.